Reading from the N-terminus, the 525-residue chain is AarF domain-containing protein kinase 1 (525 aa).

Positions 148–477 constitute a Protein kinase domain; the sequence is SFDDTPLGAA…HKKRDAGSFF (330 aa). ATP contacts are provided by residues 154 to 162 and Lys176; that span reads LGAASLAQV. Asp308 functions as the Proton acceptor in the catalytic mechanism.

This sequence belongs to the protein kinase superfamily. ADCK protein kinase family.

Its subcellular location is the mitochondrion. In terms of biological role, appears to be essential for maintaining mitochondrial cristae formation and mitochondrial function by acting via YME1L1 in a kinase-independent manner to regulate essential mitochondrial structural proteins OPA1 and IMMT. The action of this enzyme is not yet clear. It is not known if it has protein kinase activity and what type of substrate it would phosphorylate (Ser, Thr or Tyr). The sequence is that of AarF domain-containing protein kinase 1 (Adck1) from Mus musculus (Mouse).